Reading from the N-terminus, the 296-residue chain is 4-hydroxybenzoate octaprenyltransferase (296 aa).

The next 8 membrane-spanning stretches (helical) occupy residues 28-48 (PIGI…AGLG), 52-72 (LANV…GCCI), 102-122 (ALAL…CTNS), 145-167 (TYYP…FTAA), 174-196 (SAWL…YAMV), 219-239 (MIIL…GSRF), 241-261 (LGGW…WEYW), and 275-295 (FLHN…DYAL).

It belongs to the UbiA prenyltransferase family. Mg(2+) serves as cofactor.

Its subcellular location is the cell inner membrane. The catalysed reaction is all-trans-octaprenyl diphosphate + 4-hydroxybenzoate = 4-hydroxy-3-(all-trans-octaprenyl)benzoate + diphosphate. It participates in cofactor biosynthesis; ubiquinone biosynthesis. In terms of biological role, catalyzes the prenylation of para-hydroxybenzoate (PHB) with an all-trans polyprenyl group. Mediates the second step in the final reaction sequence of ubiquinone-8 (UQ-8) biosynthesis, which is the condensation of the polyisoprenoid side chain with PHB, generating the first membrane-bound Q intermediate 3-octaprenyl-4-hydroxybenzoate. The sequence is that of 4-hydroxybenzoate octaprenyltransferase from Pseudomonas putida (strain W619).